The following is a 130-amino-acid chain: ATP synthase epsilon chain (130 aa).

Belongs to the ATPase epsilon chain family. F-type ATPases have 2 components, CF(1) - the catalytic core - and CF(0) - the membrane proton channel. CF(1) has five subunits: alpha(3), beta(3), gamma(1), delta(1), epsilon(1). CF(0) has three main subunits: a, b and c.

The protein localises to the cell inner membrane. Functionally, produces ATP from ADP in the presence of a proton gradient across the membrane. The chain is ATP synthase epsilon chain from Campylobacter lari (strain RM2100 / D67 / ATCC BAA-1060).